Here is a 423-residue protein sequence, read N- to C-terminus: CinA-like protein (423 aa).

The protein belongs to the CinA family.

The sequence is that of CinA-like protein from Chlorobaculum tepidum (strain ATCC 49652 / DSM 12025 / NBRC 103806 / TLS) (Chlorobium tepidum).